Consider the following 171-residue polypeptide: Large ribosomal subunit protein uL10 (171 aa).

This sequence belongs to the universal ribosomal protein uL10 family. In terms of assembly, part of the ribosomal stalk of the 50S ribosomal subunit. The N-terminus interacts with L11 and the large rRNA to form the base of the stalk. The C-terminus forms an elongated spine to which L12 dimers bind in a sequential fashion forming a multimeric L10(L12)X complex.

In terms of biological role, forms part of the ribosomal stalk, playing a central role in the interaction of the ribosome with GTP-bound translation factors. In Paracoccus denitrificans (strain Pd 1222), this protein is Large ribosomal subunit protein uL10.